Here is a 679-residue protein sequence, read N- to C-terminus: Patatin-like phospholipase 1 (679 aa).

Disordered regions lie at residues 19–45 and 155–194; these read FSDD…NAEN and GEYE…NYNS. Composition is skewed to polar residues over residues 35 to 45 and 162 to 176; these read YSGSETQNAEN and TSSY…NTVG. The span at 177–188 shows a compositional bias: basic and acidic residues; the sequence is SEKEETENKNEE. The PNPLA domain occupies 338 to 544; sequence LSLDGGGILT…KASNPALIAL (207 aa). Positions 381 to 385 match the GXSXG motif; that stretch reads GTSAG. Ser383 functions as the Nucleophile in the catalytic mechanism. Catalysis depends on Asp531, which acts as the Proton acceptor. The DGA/G motif lies at 531–533; that stretch reads DGA.

It belongs to the patatin family.

Its subcellular location is the cytoplasm. The enzyme catalyses a 1,2-diacyl-sn-glycero-3-phosphocholine + H2O = a 1-acyl-sn-glycero-3-phosphocholine + a fatty acid + H(+). It carries out the reaction 1,2-dihexadecanoyl-sn-glycero-3-phosphocholine + H2O = 1-hexadecanoyl-sn-glycero-3-phosphocholine + hexadecanoate + H(+). Functionally, hydrolyzes the ester bond of the fatty acyl group attached at the sn-2 position of phospholipids such as phosphatidylcholine. Involved in gametogenesis; however, it is not clear whether it is involved in gametocytes development in host erythrocytes or in gametocyte activation in the mosquito midgut. Involved in gametocyte development in host erythrocytes; however, not involved in gametocytes activation including male gamete exflagellation. Involved in the rounding up of gametocytes following activation in the mosquito midgut; however, not required for gametocyte development in host erythrocytes. Required for exflagellation of activated male gametocytes. Involved in gametocytes egress from host erythrocytes by promoting the relocalization of perforin-like protein PLP2-containing vesicles to the periphery of gametocytes; PLP2 secretion is required for permeabilization of the erythrocyte membrane and thus, promotes gametocyte egress. Dispensable for asexual blood stage development. This Plasmodium falciparum (isolate NF54) protein is Patatin-like phospholipase 1.